Consider the following 165-residue polypeptide: Shikimate kinase (165 aa).

Position 11–16 (11–16 (GAGKTT)) interacts with ATP. Threonine 15 lines the Mg(2+) pocket. Substrate contacts are provided by aspartate 33, arginine 57, and glycine 78. Residue arginine 116 participates in ATP binding. Arginine 134 lines the substrate pocket.

The protein belongs to the shikimate kinase family. Monomer. It depends on Mg(2+) as a cofactor.

Its subcellular location is the cytoplasm. It carries out the reaction shikimate + ATP = 3-phosphoshikimate + ADP + H(+). The protein operates within metabolic intermediate biosynthesis; chorismate biosynthesis; chorismate from D-erythrose 4-phosphate and phosphoenolpyruvate: step 5/7. In terms of biological role, catalyzes the specific phosphorylation of the 3-hydroxyl group of shikimic acid using ATP as a cosubstrate. This is Shikimate kinase from Bacillus cytotoxicus (strain DSM 22905 / CIP 110041 / 391-98 / NVH 391-98).